Reading from the N-terminus, the 212-residue chain is Ropporin-1 (212 aa).

Residues 12–43 (PELPELLKQFTKAAIRSQPQDLIQWAAEYFGA) enclose the RIIa domain. Position 56 is a phosphoserine (S56). The segment at 209–212 (VRLE) is interaction with RHPN1.

This sequence belongs to the ropporin family. In terms of assembly, homodimer. Interacts with AKAP3. May interact with SPA17. Interacts with RHPN1. Interacts with FSCB; the interaction increases upon spermatozoa capacitation conditions. Interacts with CFAP61. In terms of processing, sumoylated, sumoylation decreases upon spermatozoa capacitation conditions.

Its subcellular location is the cell projection. The protein localises to the cilium. It localises to the flagellum. Functionally, important for male fertility. With ROPN1L, involved in fibrous sheath integrity and sperm motility, plays a role in PKA-dependent signaling processes required for spermatozoa capacitation. The sequence is that of Ropporin-1 (ROPN1) from Bos taurus (Bovine).